We begin with the raw amino-acid sequence, 144 residues long: Cytochrome c3 (144 aa).

A signal peptide spans Met-1–Ala-24. The heme c site is built by His-51, His-54, Cys-59, Cys-62, His-63, His-64, Cys-76, Cys-81, His-82, His-100, Cys-108, Cys-111, His-112, Cys-125, Cys-128, and His-129.

Belongs to the cytochrome c family. In terms of assembly, homodimer. Heterotrimer of cytochrome c3 FDH2C and formate dehydrogenase FDH2 alpha and beta subunits that forms the FdhABC(3) complex. Binds 4 heme c groups per subunit.

The protein resides in the periplasm. Functionally, participates in sulfate respiration coupled with phosphorylation by transferring electrons from the enzyme dehydrogenase to ferredoxin. Gamma chain of the formate dehydrogenase (FDH) that catalyzes the reversible two-electron oxidation of formate to carbon dioxide. The gamma subunit of formate dehydrogenase forms a c-type heme. The protein is Cytochrome c3 of Nitratidesulfovibrio vulgaris (strain ATCC 29579 / DSM 644 / CCUG 34227 / NCIMB 8303 / VKM B-1760 / Hildenborough) (Desulfovibrio vulgaris).